The chain runs to 176 residues: Cytochrome c-552 (176 aa).

Residues 12-32 form a helical; Signal-anchor membrane-spanning segment; sequence GALIGSLLFLLLMSWAASGIF. Heme c is bound by residues cysteine 90, cysteine 93, histidine 94, methionine 126, and methionine 154.

Binds 1 heme c group covalently per subunit.

The protein localises to the cell membrane. In terms of biological role, mediates the electron transport between the cytochrome bc1 complex and cytochrome-c oxidase. The sequence is that of Cytochrome c-552 (cycM) from Paracoccus denitrificans.